A 502-amino-acid polypeptide reads, in one-letter code: UPF0371 protein CLK_3516 (502 aa).

It belongs to the UPF0371 family.

This is UPF0371 protein CLK_3516 from Clostridium botulinum (strain Loch Maree / Type A3).